Here is a 416-residue protein sequence, read N- to C-terminus: MLKRDMNIADYDPELYAAIQEETLRQEEHIELIASENYTSPRVMQAQGSQLTNKYAEGYPGKRYYGGCEYVDKAEALAIDRACQLFGCEYANVQPHSGSQANSAVYMALLNPGDTVLGMSLAHGGHLTHGSPVNFSGKHYNVIPYGIDEAGQINYDEMEALALEHKPKMIIGGFSAYSQIVDWKRMREIADKVGAYLFVDMAHVAGLIAAGVYPSPVPFAHVVTTTTHKTLAGPRGGLILSNAGEEMYKKLNSAVFPGGQGGPLMHVIAAKAVAFKEAMEPEFKEYQARVVKNAKAMVAQFQERGYKIVSNSTENHLFLVDLIDKNITGKEADAALGAANITVNKNSVPNDPRSPFVTSGIRVGTPAITRRGFTEQDAKDLANWMCDVLDNINDQGVIEATKQKVLAICQRLPVYA.

Residues Leu-121 and 125 to 127 (GHL) contribute to the (6S)-5,6,7,8-tetrahydrofolate site. Residue Lys-229 is modified to N6-(pyridoxal phosphate)lysine. Residues Glu-245 and 354–356 (SPF) contribute to the (6S)-5,6,7,8-tetrahydrofolate site.

The protein belongs to the SHMT family. Homodimer. The cofactor is pyridoxal 5'-phosphate.

The protein resides in the cytoplasm. It carries out the reaction (6R)-5,10-methylene-5,6,7,8-tetrahydrofolate + glycine + H2O = (6S)-5,6,7,8-tetrahydrofolate + L-serine. It participates in one-carbon metabolism; tetrahydrofolate interconversion. The protein operates within amino-acid biosynthesis; glycine biosynthesis; glycine from L-serine: step 1/1. In terms of biological role, catalyzes the reversible interconversion of serine and glycine with tetrahydrofolate (THF) serving as the one-carbon carrier. This reaction serves as the major source of one-carbon groups required for the biosynthesis of purines, thymidylate, methionine, and other important biomolecules. Also exhibits THF-independent aldolase activity toward beta-hydroxyamino acids, producing glycine and aldehydes, via a retro-aldol mechanism. The sequence is that of Serine hydroxymethyltransferase 1 from Vibrio cholerae serotype O1 (strain ATCC 39315 / El Tor Inaba N16961).